The sequence spans 117 residues: Immunoglobulin kappa variable 1-16 (117 aa).

A signal peptide spans M1–C22. Residues D23–C45 form a framework-1 region. The 94-residue stretch at I24–P117 folds into the Ig-like domain. C45 and C110 are joined by a disulfide. The interval R46 to A56 is complementarity-determining-1. The tract at residues W57–Y71 is framework-2. The interval A72–S78 is complementarity-determining-2. Residues G79–C110 are framework-3. A complementarity-determining-3 region spans residues Q111–P117.

In terms of assembly, immunoglobulins are composed of two identical heavy chains and two identical light chains; disulfide-linked.

It is found in the secreted. The protein resides in the cell membrane. Its function is as follows. V region of the variable domain of immunoglobulin light chains that participates in the antigen recognition. Immunoglobulins, also known as antibodies, are membrane-bound or secreted glycoproteins produced by B lymphocytes. In the recognition phase of humoral immunity, the membrane-bound immunoglobulins serve as receptors which, upon binding of a specific antigen, trigger the clonal expansion and differentiation of B lymphocytes into immunoglobulins-secreting plasma cells. Secreted immunoglobulins mediate the effector phase of humoral immunity, which results in the elimination of bound antigens. The antigen binding site is formed by the variable domain of one heavy chain, together with that of its associated light chain. Thus, each immunoglobulin has two antigen binding sites with remarkable affinity for a particular antigen. The variable domains are assembled by a process called V-(D)-J rearrangement and can then be subjected to somatic hypermutations which, after exposure to antigen and selection, allow affinity maturation for a particular antigen. The protein is Immunoglobulin kappa variable 1-16 of Homo sapiens (Human).